The following is a 160-amino-acid chain: MNIWVDADACPAEVKDILWRAAQRWQVPVTLVANQLLRVPASPWMRAVQVPRGFDVADAHIVASAVPGDLVITADIPLAAEVVGKGVAAMSWRGEVFDAGSIGERLTMRDMMEELRAGGVDIGGPAAFGQADRRAFANALDAAMQRWARTRGAGGKPGAV.

This sequence belongs to the UPF0178 family.

The chain is UPF0178 protein BPP1051 from Bordetella parapertussis (strain 12822 / ATCC BAA-587 / NCTC 13253).